A 398-amino-acid chain; its full sequence is Argininosuccinate synthase (398 aa).

8–16 provides a ligand contact to ATP; the sequence is AYSGGLDTS. Tyr87 provides a ligand contact to L-citrulline. ATP is bound at residue Gly117. The L-aspartate site is built by Thr119, Asn123, and Asp124. Asn123 lines the L-citrulline pocket. L-citrulline-binding residues include Arg127, Ser175, Glu260, and Tyr272.

The protein belongs to the argininosuccinate synthase family. Type 1 subfamily. Homotetramer.

The protein resides in the cytoplasm. The catalysed reaction is L-citrulline + L-aspartate + ATP = 2-(N(omega)-L-arginino)succinate + AMP + diphosphate + H(+). It functions in the pathway amino-acid biosynthesis; L-arginine biosynthesis; L-arginine from L-ornithine and carbamoyl phosphate: step 2/3. This chain is Argininosuccinate synthase, found in Mycobacterium ulcerans (strain Agy99).